Reading from the N-terminus, the 421-residue chain is MVADVLLTHFNQLFCLNDPGHPLTGQEMKKATIVEDGYIAIKDGLIVALGSGEPDAELVGPQTIMRSYKGKIATPGIIDCHTHLVYGGSREHEFAKKLAGVPYLDILAQGGGILSTVRATRSASFDNLYQKSKRLLDYMLLHGVTTVEAKSGYGLDWETEKRQLDVVAALEKDHPIDLVSTFMAAHAIPEEYKGNPKAYLDVIIKDMLPVVKEKNLAEFCDIFCEKNVFTADESRYLLSKAKEMGFKLRIHADEIASIGGVDVAAELSAVSAEHLMMITNDGIAKLIGAGVIGNLLPATTFSLMEDTYAPARKMIDAGMAITLSTDSNPGSCPTANMQFVMQLGCFMLRLTPIEVLNAVTINAAYSVNRQERVGSLTVGKEADIAIFDAPNIDYLFYFFATNLIHQVYKKGQLTVDRGRIL.

The Fe(3+) site is built by histidine 81 and histidine 83. Zn(2+)-binding residues include histidine 81 and histidine 83. 3 residues coordinate 4-imidazolone-5-propanoate: arginine 90, tyrosine 153, and histidine 186. Tyrosine 153 is a binding site for N-formimidoyl-L-glutamate. Histidine 251 lines the Fe(3+) pocket. Position 251 (histidine 251) interacts with Zn(2+). Residue glutamate 254 participates in 4-imidazolone-5-propanoate binding. Aspartate 326 is a binding site for Fe(3+). Zn(2+) is bound at residue aspartate 326. Residues asparagine 328 and glycine 330 each coordinate N-formimidoyl-L-glutamate. Residue serine 331 coordinates 4-imidazolone-5-propanoate.

Belongs to the metallo-dependent hydrolases superfamily. HutI family. Zn(2+) is required as a cofactor. Requires Fe(3+) as cofactor.

It localises to the cytoplasm. It catalyses the reaction 4-imidazolone-5-propanoate + H2O = N-formimidoyl-L-glutamate. Its pathway is amino-acid degradation; L-histidine degradation into L-glutamate; N-formimidoyl-L-glutamate from L-histidine: step 3/3. Catalyzes the hydrolytic cleavage of the carbon-nitrogen bond in imidazolone-5-propanoate to yield N-formimidoyl-L-glutamate. It is the third step in the universal histidine degradation pathway. The polypeptide is Imidazolonepropionase (Streptococcus pyogenes serotype M6 (strain ATCC BAA-946 / MGAS10394)).